The following is a 235-amino-acid chain: MNAIKFLTQNEAIVMDQLLMGKKYAFSTDSLMELAGLSCASVIQHVYPTISKKVLTICGPGNNGGDGLVASRHLVQFGYDVNIYYPKRTDKELYHNLVTQCKHEGIEFLESMPTNDQLNNDYGLVIDSIFGYSFKGDIRSPFDTIIKDSLNNIKTPIASIDMPSGWDVENGNIKNLFTPDLLISLAAPKLGSKSFKGKHYLGGRFLPKEFLKETNLTIPKFNGSNQFVDITNYQN.

The 207-residue stretch at 12-218 folds into the YjeF N-terminal domain; it reads AIVMDQLLMG…EFLKETNLTI (207 aa). Position 62 to 66 (62 to 66) interacts with (6S)-NADPHX; that stretch reads NNGGD. 2 residues coordinate K(+): N63 and D127. (6S)-NADPHX-binding positions include 131-137 and D161; that span reads GYSFKGD. S164 contributes to the K(+) binding site.

The protein belongs to the NnrE/AIBP family. K(+) serves as cofactor.

The enzyme catalyses (6R)-NADHX = (6S)-NADHX. The catalysed reaction is (6R)-NADPHX = (6S)-NADPHX. In terms of biological role, catalyzes the epimerization of the S- and R-forms of NAD(P)HX, a damaged form of NAD(P)H that is a result of enzymatic or heat-dependent hydration. This is a prerequisite for the S-specific NAD(P)H-hydrate dehydratase to allow the repair of both epimers of NAD(P)HX. The protein is NAD(P)H-hydrate epimerase of Dictyostelium discoideum (Social amoeba).